Consider the following 1063-residue polypeptide: ATP-dependent helicase hrq1 (1063 aa).

A disordered region spans residues 224-243; the sequence is TQSRKNQPVPPDSPSIPNDS. One can recognise a Helicase ATP-binding domain in the interval 320–503; it reads INHLWNGFHV…KIFGVDNIKL (184 aa). 333-340 contacts ATP; the sequence is TSTSSGKS. Positions 444-447 match the DEAH box motif; sequence DEAH. The region spanning 539–717 is the Helicase C-terminal domain; that stretch reads EASKLLIKFA…ELPINIRSDE (179 aa).

The protein belongs to the helicase family. HRQ1 subfamily. In terms of assembly, forms heptamer rings. Interacts with rhp14. It depends on Mg(2+) as a cofactor.

It is found in the nucleus. It catalyses the reaction Couples ATP hydrolysis with the unwinding of duplex DNA by translocating in the 3'-5' direction.. The enzyme catalyses ATP + H2O = ADP + phosphate + H(+). Functionally, helicase with 3'-5' helicase activity involved in genome stability. Functions in the nucleotide excision repair (NER) pathway and plays a critical role in DNA interstrand cross-link repair. Unwinds relatively long duplex DNA up to 120-bp and requires a long 3'-tail of at least 70 nucleotides for efficient unwinding of duplex DNA. Shows both processive helicase and DNA strand annealing activities. Affects telomere length by a non-catalytic mechanism, probably through inhibiting telomerase by competing with it for ssDNA binding. The protein is ATP-dependent helicase hrq1 of Schizosaccharomyces pombe (strain 972 / ATCC 24843) (Fission yeast).